The following is a 330-amino-acid chain: Inorganic pyrophosphatase 2, mitochondrial (330 aa).

A mitochondrion-targeting transit peptide spans 1–27; the sequence is MRALLPLLSVGRGWRVGAAARPPRRVM. Mg(2+)-binding residues include aspartate 159, aspartate 164, and aspartate 196. Lysine 211 is modified (N6-succinyllysine). Lysine 219 is subject to N6-acetyllysine. Lysine 254 bears the N6-succinyllysine mark. An N6-acetyllysine modification is found at lysine 256.

Belongs to the PPase family. In terms of assembly, homodimer. Requires Mg(2+) as cofactor.

It is found in the mitochondrion. The catalysed reaction is diphosphate + H2O = 2 phosphate + H(+). In terms of biological role, hydrolyzes inorganic pyrophosphate. This activity is essential for correct regulation of mitochondrial membrane potential, and mitochondrial organization and function. The chain is Inorganic pyrophosphatase 2, mitochondrial (Ppa2) from Mus musculus (Mouse).